We begin with the raw amino-acid sequence, 1756 residues long: Transposon Ty1-PR2 Gag-Pol polyprotein (1756 aa).

Polar residues-rich tracts occupy residues Met1 to Pro10, Thr48 to Ser60, and Gln127 to Phe152. 3 disordered regions span residues Met1 to Gln93, Pro126 to Pro173, and Gly352 to Thr421. Residues Thr153 to Thr165 are compositionally biased toward low complexity. The interval Asn299–His401 is RNA-binding. The segment covering Asn402 to Ser418 has biased composition (low complexity). Asp461 functions as the For protease activity; shared with dimeric partner in the catalytic mechanism. The tract at residues Asn583–Cys640 is integrase-type zinc finger-like. Residues Asn660–Pro836 enclose the Integrase catalytic domain. Mg(2+)-binding residues include Asp671 and Asp736. Disordered regions lie at residues Ser957 to Lys1088, Arg1093 to Pro1112, and Asp1131 to Thr1188. The segment covering Ser961 to Thr970 has biased composition (low complexity). The span at Ser1006–Thr1016 shows a compositional bias: polar residues. Positions Glu1039–Ser1054 are enriched in basic and acidic residues. Composition is skewed to polar residues over residues Tyr1055 to Asp1083 and Pro1102 to Pro1112. The Bipartite nuclear localization signal motif lies at Lys1179 to Arg1213. Positions Asn1339–Gln1477 constitute a Reverse transcriptase Ty1/copia-type domain. Mg(2+) contacts are provided by Asp1347, Asp1428, Asp1429, Asp1611, Glu1653, and Asp1686. The 143-residue stretch at Asp1611–Lys1753 folds into the RNase H Ty1/copia-type domain.

The capsid protein forms a homotrimer, from which the VLPs are assembled. The protease is a homodimer, whose active site consists of two apposed aspartic acid residues. In terms of processing, initially, virus-like particles (VLPs) are composed of the structural unprocessed proteins Gag and Gag-Pol, and also contain the host initiator methionine tRNA (tRNA(i)-Met) which serves as a primer for minus-strand DNA synthesis, and a dimer of genomic Ty RNA. Processing of the polyproteins occurs within the particle and proceeds by an ordered pathway, called maturation. First, the protease (PR) is released by autocatalytic cleavage of the Gag-Pol polyprotein yielding capsid protein p45 and a Pol-p154 precursor protein. This cleavage is a prerequisite for subsequent processing of Pol-p154 at the remaining sites to release the mature structural and catalytic proteins. Maturation takes place prior to the RT reaction and is required to produce transposition-competent VLPs.

Its subcellular location is the cytoplasm. It localises to the nucleus. It catalyses the reaction DNA(n) + a 2'-deoxyribonucleoside 5'-triphosphate = DNA(n+1) + diphosphate. The catalysed reaction is Endonucleolytic cleavage to 5'-phosphomonoester.. Its function is as follows. Capsid protein (CA) is the structural component of the virus-like particle (VLP), forming the shell that encapsulates the retrotransposons dimeric RNA genome. The particles are assembled from trimer-clustered units and there are holes in the capsid shells that allow for the diffusion of macromolecules. CA also has nucleocapsid-like chaperone activity, promoting primer tRNA(i)-Met annealing to the multipartite primer-binding site (PBS), dimerization of Ty1 RNA and initiation of reverse transcription. The aspartyl protease (PR) mediates the proteolytic cleavages of the Gag and Gag-Pol polyproteins after assembly of the VLP. Functionally, reverse transcriptase/ribonuclease H (RT) is a multifunctional enzyme that catalyzes the conversion of the retro-elements RNA genome into dsDNA within the VLP. The enzyme displays a DNA polymerase activity that can copy either DNA or RNA templates, and a ribonuclease H (RNase H) activity that cleaves the RNA strand of RNA-DNA heteroduplexes during plus-strand synthesis and hydrolyzes RNA primers. The conversion leads to a linear dsDNA copy of the retrotransposon that includes long terminal repeats (LTRs) at both ends. In terms of biological role, integrase (IN) targets the VLP to the nucleus, where a subparticle preintegration complex (PIC) containing at least integrase and the newly synthesized dsDNA copy of the retrotransposon must transit the nuclear membrane. Once in the nucleus, integrase performs the integration of the dsDNA into the host genome. The sequence is that of Transposon Ty1-PR2 Gag-Pol polyprotein (TY1B-PR2) from Saccharomyces cerevisiae (strain ATCC 204508 / S288c) (Baker's yeast).